Reading from the N-terminus, the 283-residue chain is Bifunctional protein FolD (283 aa).

NADP(+) contacts are provided by residues 165 to 167 (GRG), Thr192, and Val233.

This sequence belongs to the tetrahydrofolate dehydrogenase/cyclohydrolase family. Homodimer.

The catalysed reaction is (6R)-5,10-methylene-5,6,7,8-tetrahydrofolate + NADP(+) = (6R)-5,10-methenyltetrahydrofolate + NADPH. It carries out the reaction (6R)-5,10-methenyltetrahydrofolate + H2O = (6R)-10-formyltetrahydrofolate + H(+). It participates in one-carbon metabolism; tetrahydrofolate interconversion. Functionally, catalyzes the oxidation of 5,10-methylenetetrahydrofolate to 5,10-methenyltetrahydrofolate and then the hydrolysis of 5,10-methenyltetrahydrofolate to 10-formyltetrahydrofolate. The chain is Bifunctional protein FolD from Mycolicibacterium smegmatis (strain ATCC 700084 / mc(2)155) (Mycobacterium smegmatis).